We begin with the raw amino-acid sequence, 208 residues long: Ribosomal RNA small subunit methyltransferase G (208 aa).

S-adenosyl-L-methionine-binding positions include glycine 76, leucine 81, 127 to 128, and arginine 142; that span reads VE.

It belongs to the methyltransferase superfamily. RNA methyltransferase RsmG family.

Its subcellular location is the cytoplasm. It catalyses the reaction guanosine(527) in 16S rRNA + S-adenosyl-L-methionine = N(7)-methylguanosine(527) in 16S rRNA + S-adenosyl-L-homocysteine. Its function is as follows. Specifically methylates the N7 position of guanine in position 527 of 16S rRNA. This is Ribosomal RNA small subunit methyltransferase G from Legionella pneumophila (strain Corby).